The primary structure comprises 247 residues: uncharacterized protein (247 aa).

Residues Leu11, Asn85, and Lys119 each coordinate NADP(+). Ser136 acts as the Proton donor in catalysis. 4 residues coordinate NADP(+): Tyr150, Lys154, Val181, and Thr183. Catalysis depends on Tyr150, which acts as the Proton acceptor. The Lowers pKa of active site Tyr role is filled by Lys154.

Belongs to the short-chain dehydrogenases/reductases (SDR) family.

This is an uncharacterized protein from Schizosaccharomyces pombe (strain 972 / ATCC 24843) (Fission yeast).